A 370-amino-acid polypeptide reads, in one-letter code: Probable G-protein coupled receptor 85 (370 aa).

The Extracellular portion of the chain corresponds to 1–25 (MANYSHAADNILQNLSPLTAFLKLT). N-linked (GlcNAc...) asparagine glycosylation occurs at N3. A helical transmembrane segment spans residues 26–46 (SLGFIIGVSVVGNLLISILLV). At 47 to 57 (KDKTLHRAPYY) the chain is on the cytoplasmic side. A helical membrane pass occupies residues 58 to 78 (FLLDLCCSDILRSAICFPFVF). The Extracellular segment spans residues 79–96 (NSVKNGSTWTYGTLTCKV). The N-linked (GlcNAc...) asparagine glycan is linked to N83. C94 and C172 are joined by a disulfide. The helical transmembrane segment at 97–117 (IAFLGVLSCFHTAFMLFCISV) threads the bilayer. Over 118–137 (TRYLAIAHHRFYTKRLTFWT) the chain is Cytoplasmic. Residues 138 to 158 (CLAVICMVWTLSVAMAFPPVL) traverse the membrane as a helical segment. The Extracellular portion of the chain corresponds to 159-188 (DVGTYSFIREEDQCTFQHRSFRANDSLGFM). N182 carries an N-linked (GlcNAc...) asparagine glycan. Residues 189–209 (LLLALILLATQLVYLKLIFFV) traverse the membrane as a helical segment. At 210–286 (HDRRKMKPVQ…FKMEKRISRM (77 aa)) the chain is on the cytoplasmic side. A helical membrane pass occupies residues 287–307 (FYIMTFLFLTLWGPYLVACYW). Residues 308–313 (RVFARG) are Extracellular-facing. A helical transmembrane segment spans residues 314-334 (PVVPGGFLTAAVWMSFAQAGI). Topologically, residues 335-370 (NPFVCIFSNRELRRCFSTTLLYCRKSRLPREPYCVI) are cytoplasmic.

Belongs to the G-protein coupled receptor 1 family. As to quaternary structure, interacts with DLG4 and DLG3. As to expression, highly expressed in brain and testis. Lower levels in small intestine, placenta and spleen. In brain regions, detected in all regions tested, but somewhat lower levels in the corpus callosum, medulla and spinal cord.

The protein resides in the cell membrane. It is found in the endoplasmic reticulum. Orphan receptor. The protein is Probable G-protein coupled receptor 85 (GPR85) of Homo sapiens (Human).